The sequence spans 176 residues: Probable DNA-directed RNA polymerase subunit delta (176 aa).

Residues 14–81 enclose the HTH HARE-type domain; sequence LSLIDVAHFI…GNNMWGLRAW (68 aa). 2 disordered regions span residues 91–119 and 140–176; these read VQTQTTPKKKRKSDDDDDEEILDDDVDYD and DEDEDEDDHLPDGIEGDLATVEDDYTDGDYTEDPEDK. Acidic residues-rich tracts occupy residues 105–119 and 159–176; these read DDDDEEILDDDVDYD and TVEDDYTDGDYTEDPEDK.

Belongs to the RpoE family. RNAP is composed of a core of 2 alpha, a beta and a beta' subunits. The core is associated with a delta subunit and one of several sigma factors.

Its function is as follows. Participates in both the initiation and recycling phases of transcription. In the presence of the delta subunit, RNAP displays an increased specificity of transcription, a decreased affinity for nucleic acids, and an increased efficiency of RNA synthesis because of enhanced recycling. This Listeria welshimeri serovar 6b (strain ATCC 35897 / DSM 20650 / CCUG 15529 / CIP 8149 / NCTC 11857 / SLCC 5334 / V8) protein is Probable DNA-directed RNA polymerase subunit delta.